The following is a 361-amino-acid chain: Cyclin-Y-like protein 2 (361 aa).

Residues Met204 to Asn286 form the Cyclin N-terminal domain.

Belongs to the cyclin family. Cyclin Y subfamily.

This is Cyclin-Y-like protein 2 (CCNYL2) from Homo sapiens (Human).